The primary structure comprises 117 residues: Minor capsid protein p17 (117 aa).

The N-linked (GlcNAc...) asparagine; by host glycan is linked to N12. The helical transmembrane segment at 39-59 (AIILGILILLVIILIIVAIVY) threads the bilayer. Residues N61 and N97 are each glycosylated (N-linked (GlcNAc...) asparagine; by host).

The protein belongs to the asfivirus minor capsid protein p17 family. In terms of assembly, interacts with the minor capsid protein M1249L and with the hexon capsid protein p72 capsomers; these interactions form a rigid zipper structure that stabilizes the capsomers. Interacts with host STING1.

The protein localises to the virion membrane. It is found in the host endoplasmic reticulum membrane. In terms of biological role, together with the penton and the other minor capsid proteins (M1249L, p49), forms a complicated network immediately below the outer capsid shell, stabilizing the whole capsid. Three copies of p17 encircle each p72 capsomer in the inner capsid shell, anchoring p72 capsomers on the inner membrane. Required for the assembly of the capsid and icosahedral morphogenesis. Additionally, inhibits the host cGAS-STING pathway through its interaction with STING1 and subsequent interference of the recruitment of downstream components TBK1 and IKBKE. The chain is Minor capsid protein p17 from Ornithodoros (relapsing fever ticks).